A 132-amino-acid polypeptide reads, in one-letter code: Glycine cleavage system H protein (132 aa).

Residues 27–109 (FATIGISAFA…FDFGWILKVK (83 aa)) form the Lipoyl-binding domain. K68 carries the N6-lipoyllysine modification.

This sequence belongs to the GcvH family. The glycine cleavage system is composed of four proteins: P, T, L and H. The cofactor is (R)-lipoate.

In terms of biological role, the glycine cleavage system catalyzes the degradation of glycine. The H protein shuttles the methylamine group of glycine from the P protein to the T protein. The polypeptide is Glycine cleavage system H protein (Rhodopirellula baltica (strain DSM 10527 / NCIMB 13988 / SH1)).